A 954-amino-acid chain; its full sequence is Bifunctional glutamine synthetase adenylyltransferase/adenylyl-removing enzyme (954 aa).

The adenylyl removase stretch occupies residues 1-450; that stretch reads MENISNKPLS…HFIETVGGRT (450 aa). The segment at 454-954 is adenylyl transferase; sequence GADLWTQQLW…MDIYQRILVD (501 aa).

The protein belongs to the GlnE family. Mg(2+) is required as a cofactor.

The catalysed reaction is [glutamine synthetase]-O(4)-(5'-adenylyl)-L-tyrosine + phosphate = [glutamine synthetase]-L-tyrosine + ADP. The enzyme catalyses [glutamine synthetase]-L-tyrosine + ATP = [glutamine synthetase]-O(4)-(5'-adenylyl)-L-tyrosine + diphosphate. Involved in the regulation of glutamine synthetase GlnA, a key enzyme in the process to assimilate ammonia. When cellular nitrogen levels are high, the C-terminal adenylyl transferase (AT) inactivates GlnA by covalent transfer of an adenylyl group from ATP to specific tyrosine residue of GlnA, thus reducing its activity. Conversely, when nitrogen levels are low, the N-terminal adenylyl removase (AR) activates GlnA by removing the adenylyl group by phosphorolysis, increasing its activity. The regulatory region of GlnE binds the signal transduction protein PII (GlnB) which indicates the nitrogen status of the cell. The chain is Bifunctional glutamine synthetase adenylyltransferase/adenylyl-removing enzyme from Shewanella woodyi (strain ATCC 51908 / MS32).